The following is a 273-amino-acid chain: Large ribosomal subunit protein uL29m (273 aa).

Positions 247 to 258 are enriched in basic and acidic residues; the sequence is PLRHDRWEKGQE. Positions 247-273 are disordered; that stretch reads PLRHDRWEKGQEENSGGETEDGNAPSN.

This sequence belongs to the universal ribosomal protein uL29 family. Component of the mitochondrial large ribosomal subunit. Mature mitochondrial ribosomes consist of a small (37S) and a large (54S) subunit. The 37S subunit contains at least 33 different proteins and 1 molecule of RNA (15S). The 54S subunit contains at least 45 different proteins and 1 molecule of RNA (21S).

It localises to the mitochondrion. This is Large ribosomal subunit protein uL29m (mrpl4) from Aspergillus niger (strain ATCC MYA-4892 / CBS 513.88 / FGSC A1513).